An 82-amino-acid chain; its full sequence is Putative defensin-like protein 70 (82 aa).

An N-terminal signal peptide occupies residues 1 to 27 (MKMESSKMLVVFTLMVLIAVSSDLVSG). 4 disulfides stabilise this stretch: Cys39/Cys80, Cys43/Cys66, Cys52/Cys78, and Cys56/Cys79.

It belongs to the DEFL family.

It localises to the secreted. In Arabidopsis thaliana (Mouse-ear cress), this protein is Putative defensin-like protein 70 (LCR83).